A 101-amino-acid chain; its full sequence is Non-structural protein NS-S (101 aa).

It belongs to the orthobunyavirus NS-S protein family.

The sequence is that of Non-structural protein NS-S (N) from Equus caballus (Horse).